A 792-amino-acid polypeptide reads, in one-letter code: MKFSENWLRSHVPIQATRDELAATLTAIGLEVEEVIPLGESLGQVVVARIVEAMRHPEADRLQVCSVDAGQGELLQIVCGAPNARPGLVAPLALVGAKIGELTITAAKLRGVASNGMLCSAKELGLDSDAAGLFELPDDAPVGQALAEYLGLPDASIEIKLTPNRADCFSVRGIAFDVAAACASEVVAFDAGAVAPVSTRTLAVELDAGKDAPRYCGRVIEGIDPAAKTPVWLAERLRRSGVRPVSLLVDITQYVMLELGQPMHAFDLDTLHGPIGVRRSCAGEQLALLDGRQVTLDDSFLTIADAGRPVALAGLMGGLDTRVTETTRNVFLESAYFDPAAIMGRGRKLGLHTDAGHRFERGVDPALPPQAIEVATRLVLELAGGTPGPVVHAQLPQHLPQPARILLRRARIARVLGIQIDDVDVVRMLRALGMQLDAVAEGWEVMAPSRRFDIAIEEDLIEDLARIHGYDRVPTTLPGGASRIAMPSETQLDELSVRRQLVARELQETINYAFVDAALLERWQLTNGLVPLANPLSAELAIMRPCLLPGLVATLGRNAARQAGRVRLFELGKVFAAAADAGAAPQESQHVAAAVCGDALALQWGEAARKVDFHDVKGDLMALAAASGAQLEFQPSTQPFGHPGRSADIYRDGVCIGWIGQVHPRLAKALDIDVDVIAFELQLGPLVQRTLPCAGELSRFPSVRRDLAFLVPDEVSWAAVSASVRTTVGPLLREVQLFDRYVGQGVAPGFKSLAMGLILQDNSRTLTDRDVDAVVTDVVAVIEREHRARIRS.

Residues 39-147 (GESLGQVVVA…DDAPVGQALA (109 aa)) enclose the tRNA-binding domain. The B5 domain occupies 400-475 (PQPARILLRR…RIHGYDRVPT (76 aa)). The Mg(2+) site is built by Asp453, Asp459, Glu462, and Asp463. Residues 698-791 (SRFPSVRRDL…IEREHRARIR (94 aa)) enclose the FDX-ACB domain.

This sequence belongs to the phenylalanyl-tRNA synthetase beta subunit family. Type 1 subfamily. In terms of assembly, tetramer of two alpha and two beta subunits. Requires Mg(2+) as cofactor.

It localises to the cytoplasm. The enzyme catalyses tRNA(Phe) + L-phenylalanine + ATP = L-phenylalanyl-tRNA(Phe) + AMP + diphosphate + H(+). The chain is Phenylalanine--tRNA ligase beta subunit from Xanthomonas oryzae pv. oryzae (strain KACC10331 / KXO85).